The sequence spans 370 residues: Protein FAM110B (370 aa).

Disordered regions lie at residues 127–151 (SSEG…RSEA) and 237–256 (KSPE…RPSL). 2 positions are modified to phosphoserine: serine 238 and serine 301. The disordered stretch occupies residues 317–337 (DCEQSQDSNSDLRNDDSANDR). The segment covering 326-335 (SDLRNDDSAN) has biased composition (basic and acidic residues).

It belongs to the FAM110 family.

It localises to the cytoplasm. The protein resides in the cytoskeleton. It is found in the microtubule organizing center. The protein localises to the centrosome. The protein is Protein FAM110B (FAM110B) of Pongo abelii (Sumatran orangutan).